The sequence spans 152 residues: Transcriptional repressor NrdR (152 aa).

A zinc finger spans residues cysteine 3–cysteine 34. In terms of domain architecture, ATP-cone spans proline 49–alanine 139.

It belongs to the NrdR family. Zn(2+) serves as cofactor.

In terms of biological role, negatively regulates transcription of bacterial ribonucleotide reductase nrd genes and operons by binding to NrdR-boxes. The chain is Transcriptional repressor NrdR from Acinetobacter baumannii (strain AB0057).